A 111-amino-acid chain; its full sequence is Prothymosin alpha-A (111 aa).

The disordered stretch occupies residues 1-111; it reads MSDTAVDASV…IKKQKTDEDD (111 aa). The segment covering 9 to 42 has biased composition (basic and acidic residues); that stretch reads SVEKTTKDLKAKEKEVVEEAENGKDKPTNGKAEN. Composition is skewed to acidic residues over residues 43–81 and 90–100; these read EENG…DEVE and EDDEDDDDDDV. Basic and acidic residues predominate over residues 101-111; sequence EIKKQKTDEDD.

Belongs to the pro/parathymosin family.

It localises to the nucleus. This chain is Prothymosin alpha-A (ptma-a), found in Xenopus laevis (African clawed frog).